The primary structure comprises 253 residues: Cell division protein ZapD (253 aa).

It belongs to the ZapD family. Interacts with FtsZ.

The protein localises to the cytoplasm. In terms of biological role, cell division factor that enhances FtsZ-ring assembly. Directly interacts with FtsZ and promotes bundling of FtsZ protofilaments, with a reduction in FtsZ GTPase activity. In Bordetella bronchiseptica (strain ATCC BAA-588 / NCTC 13252 / RB50) (Alcaligenes bronchisepticus), this protein is Cell division protein ZapD.